Consider the following 130-residue polypeptide: Small ribosomal subunit protein uS9 (130 aa).

Belongs to the universal ribosomal protein uS9 family.

This chain is Small ribosomal subunit protein uS9, found in Pseudomonas fluorescens (strain SBW25).